The following is a 352-amino-acid chain: S-adenosylmethionine:tRNA ribosyltransferase-isomerase (352 aa).

This sequence belongs to the QueA family. In terms of assembly, monomer.

It localises to the cytoplasm. It catalyses the reaction 7-aminomethyl-7-carbaguanosine(34) in tRNA + S-adenosyl-L-methionine = epoxyqueuosine(34) in tRNA + adenine + L-methionine + 2 H(+). It participates in tRNA modification; tRNA-queuosine biosynthesis. In terms of biological role, transfers and isomerizes the ribose moiety from AdoMet to the 7-aminomethyl group of 7-deazaguanine (preQ1-tRNA) to give epoxyqueuosine (oQ-tRNA). The polypeptide is S-adenosylmethionine:tRNA ribosyltransferase-isomerase (Solibacter usitatus (strain Ellin6076)).